We begin with the raw amino-acid sequence, 248 residues long: Probable transcriptional regulatory protein BARBAKC583_0163 (248 aa).

Belongs to the TACO1 family.

The protein resides in the cytoplasm. This is Probable transcriptional regulatory protein BARBAKC583_0163 from Bartonella bacilliformis (strain ATCC 35685 / KC583 / Herrer 020/F12,63).